Here is a 433-residue protein sequence, read N- to C-terminus: MRDKISESTQKIFHAVWERIAPFHEMIQSRPAVLSYSGGKDSSILLHFYFWLWIEKKIPAPCIYHLDHSIRFNLEQEKKIFEYADSTFPFSKIFKKKNIPALSRRLGKTLEETGRAFRYKDLKKISDQYEGYIVTGHHSSDYLETILLNLIRGGGWNSLRTLGWYEKNRFRPLFAFSQDEIETILQSEFWKIFEDESNNSDEYLRNRIRSYIIPLLLREGANPDRIYKNFHRIEKPVSKIFSKKNSDHKIPSFLKIDIWVLNDLSQRERKFFIDRYLRSLNLYPTTRNFFRDLTDLLQKENSFSLENKETWFWKSTSSDLYLIPKNSPCLREFRFEPKEMVLKWNGNQKKIPPDLIPDLCPAGAKIRKNGMSIEISEILRQKEIPVPVRKMLPILRGERKVDVICLSLWDPKIGDIVADREVEILPDFQEPGV.

37 to 42 (SGGKDS) is an ATP binding site.

The protein belongs to the tRNA(Ile)-lysidine synthase family.

It localises to the cytoplasm. The enzyme catalyses cytidine(34) in tRNA(Ile2) + L-lysine + ATP = lysidine(34) in tRNA(Ile2) + AMP + diphosphate + H(+). Functionally, ligates lysine onto the cytidine present at position 34 of the AUA codon-specific tRNA(Ile) that contains the anticodon CAU, in an ATP-dependent manner. Cytidine is converted to lysidine, thus changing the amino acid specificity of the tRNA from methionine to isoleucine. The sequence is that of tRNA(Ile)-lysidine synthase from Leptospira interrogans serogroup Icterohaemorrhagiae serovar Lai (strain 56601).